Here is a 440-residue protein sequence, read N- to C-terminus: Chromosome partition protein MukF (440 aa).

The tract at residues 208–236 (LSETSGTLRELQDTLEAAGDKLQANLLRI) is leucine-zipper.

This sequence belongs to the MukF family. As to quaternary structure, interacts, and probably forms a ternary complex, with MukE and MukB via its C-terminal region. The complex formation is stimulated by calcium or magnesium. It is required for an interaction between MukE and MukB.

Its subcellular location is the cytoplasm. It is found in the nucleoid. In terms of biological role, involved in chromosome condensation, segregation and cell cycle progression. May participate in facilitating chromosome segregation by condensation DNA from both sides of a centrally located replisome during cell division. Not required for mini-F plasmid partitioning. Probably acts via its interaction with MukB and MukE. Overexpression results in anucleate cells. It has a calcium binding activity. The protein is Chromosome partition protein MukF of Shigella boydii serotype 4 (strain Sb227).